We begin with the raw amino-acid sequence, 324 residues long: Beta-ketoacyl-[acyl-carrier-protein] synthase III (324 aa).

Residues C114 and H246 contribute to the active site. The ACP-binding stretch occupies residues 247–251 (QANLR). Residue N276 is part of the active site.

Belongs to the thiolase-like superfamily. FabH family. In terms of assembly, homodimer.

Its subcellular location is the cytoplasm. It catalyses the reaction malonyl-[ACP] + acetyl-CoA + H(+) = 3-oxobutanoyl-[ACP] + CO2 + CoA. It participates in lipid metabolism; fatty acid biosynthesis. In terms of biological role, catalyzes the condensation reaction of fatty acid synthesis by the addition to an acyl acceptor of two carbons from malonyl-ACP. Catalyzes the first condensation reaction which initiates fatty acid synthesis and may therefore play a role in governing the total rate of fatty acid production. Possesses both acetoacetyl-ACP synthase and acetyl transacylase activities. Its substrate specificity determines the biosynthesis of branched-chain and/or straight-chain of fatty acids. The chain is Beta-ketoacyl-[acyl-carrier-protein] synthase III from Campylobacter jejuni subsp. doylei (strain ATCC BAA-1458 / RM4099 / 269.97).